The following is a 244-amino-acid chain: DNA repair protein RecO (244 aa).

Belongs to the RecO family.

Its function is as follows. Involved in DNA repair and RecF pathway recombination. The chain is DNA repair protein RecO from Koribacter versatilis (strain Ellin345).